A 277-amino-acid chain; its full sequence is Large ribosomal subunit protein uL2 (277 aa).

Disordered regions lie at residues 37 to 59 (KNST…GGHK) and 221 to 265 (RGTA…KRTD). Residues 50–59 (TTRHRGGGHK) show a composition bias toward basic residues. Positions 229-241 (DHPHGGGEGRTGE) are enriched in basic and acidic residues.

The protein belongs to the universal ribosomal protein uL2 family. Part of the 50S ribosomal subunit. Forms a bridge to the 30S subunit in the 70S ribosome.

In terms of biological role, one of the primary rRNA binding proteins. Required for association of the 30S and 50S subunits to form the 70S ribosome, for tRNA binding and peptide bond formation. It has been suggested to have peptidyltransferase activity; this is somewhat controversial. Makes several contacts with the 16S rRNA in the 70S ribosome. This is Large ribosomal subunit protein uL2 from Chromobacterium violaceum (strain ATCC 12472 / DSM 30191 / JCM 1249 / CCUG 213 / NBRC 12614 / NCIMB 9131 / NCTC 9757 / MK).